The following is a 146-amino-acid chain: Small RNA-binding protein 11, chloroplastic (146 aa).

The transit peptide at 1–31 directs the protein to the chloroplast; the sequence is MAALARIGGRHLKSVCLINSSASCFFTQRRG. The region spanning 34–112 is the RRM domain; it reads SKLFIGGLSF…RTIFVDYAKA (79 aa). At Ser-42 the chain carries Phosphoserine.

Expressed in rosette leaves, cauline leaves, stems and flowers.

Its subcellular location is the plastid. It is found in the chloroplast. Its function is as follows. Probable RNA-binding protein that may be involved in salt and oxidative stress tolerance. This is Small RNA-binding protein 11, chloroplastic from Arabidopsis thaliana (Mouse-ear cress).